Reading from the N-terminus, the 156-residue chain is uncharacterized protein (156 aa).

Disordered regions lie at residues 22–64 and 81–156; these read KERV…VLKK and AARA…DENE. Residues 43–56 show a composition bias toward acidic residues; that stretch reads PEEDGDHSDKEDEQ. Position 50 is a phosphoserine (S50). K108 is modified (N6-acetyllysine). Over residues 121 to 134 the composition is skewed to basic and acidic residues; the sequence is TKEEDEINKQDSVK. S148 is modified (phosphoserine).

This is an uncharacterized protein from Bos taurus (Bovine).